A 148-amino-acid chain; its full sequence is Lysozyme C (148 aa).

An N-terminal signal peptide occupies residues 1–18; the sequence is MKAPLLLGLLLLSVTVQG. The 130-residue stretch at 19–148 folds into the C-type lysozyme domain; the sequence is KVFERCDLAR…VSQYVRNCGV (130 aa). 4 disulfides stabilise this stretch: Cys24–Cys146, Cys48–Cys134, Cys83–Cys99, and Cys95–Cys113. Residues Glu53 and Asp71 contribute to the active site.

Belongs to the glycosyl hydrolase 22 family. Monomer.

Its subcellular location is the secreted. The catalysed reaction is Hydrolysis of (1-&gt;4)-beta-linkages between N-acetylmuramic acid and N-acetyl-D-glucosamine residues in a peptidoglycan and between N-acetyl-D-glucosamine residues in chitodextrins.. Functionally, lysozymes have primarily a bacteriolytic function; those in tissues and body fluids are associated with the monocyte-macrophage system and enhance the activity of immunoagents. This is Lysozyme C (LYZ) from Leptonychotes weddellii (Weddell seal).